A 422-amino-acid chain; its full sequence is Metallocarboxypeptidase A (422 aa).

A signal peptide spans 1–17; sequence MRSVLSLALLAANVVTA. Residues 18–112 constitute a propeptide, activation peptide; it reads AVVSPFDYSG…FEAYSAGYAP (95 aa). A Peptidase M14 domain is found at 119-419; it reads SYHSYQDHLS…AGTVAMLKAV (301 aa). 2 residues coordinate Zn(2+): His179 and Glu182. Substrate-binding positions include 179 to 182, Arg237, and 254 to 255; these read HARE and NR. Cys248 and Cys271 are oxidised to a cystine. His309 is a binding site for Zn(2+). 310–311 contacts substrate; that stretch reads SY. The Proton donor/acceptor role is filled by Glu385.

It belongs to the peptidase M14 family. Zn(2+) is required as a cofactor.

Its subcellular location is the secreted. Extracellular metalloprotease that contributes to pathogenicity. This chain is Metallocarboxypeptidase A (MCPA), found in Trichophyton rubrum (Athlete's foot fungus).